Reading from the N-terminus, the 76-residue chain is Exodeoxyribonuclease 7 small subunit (76 aa).

This sequence belongs to the XseB family. Heterooligomer composed of large and small subunits.

Its subcellular location is the cytoplasm. It catalyses the reaction Exonucleolytic cleavage in either 5'- to 3'- or 3'- to 5'-direction to yield nucleoside 5'-phosphates.. In terms of biological role, bidirectionally degrades single-stranded DNA into large acid-insoluble oligonucleotides, which are then degraded further into small acid-soluble oligonucleotides. The protein is Exodeoxyribonuclease 7 small subunit of Staphylococcus aureus (strain Mu3 / ATCC 700698).